Reading from the N-terminus, the 2559-residue chain is Stabilin-2 (2559 aa).

The N-terminal stretch at 1 to 28 (MARSKLLLGKLLPLILIFLGLLVQNACS) is a signal peptide. Over 29–2464 (PTEAPELTKR…PPTAATAAHS (2436 aa)) the chain is Extracellular. Asn71 carries N-linked (GlcNAc...) asparagine glycosylation. 5 consecutive EGF-like domains span residues 116–156 (DCME…TACE), 164–201 (FGPN…PRCD), 203–244 (PIPE…QTCK), 245–284 (PINP…QVCL), and 330–370 (MTDI…LNCY). 3 cysteine pairs are disulfide-bonded: Cys120–Cys134, Cys128–Cys144, and Cys146–Cys155. N-linked (GlcNAc...) asparagine glycosylation is present at Asn167. Disulfide bonds link Cys168-Cys179, Cys172-Cys189, Cys191-Cys200, Cys207-Cys218, Cys212-Cys230, Cys232-Cys243, Cys249-Cys260, Cys254-Cys270, Cys272-Cys283, Cys334-Cys346, Cys340-Cys356, and Cys358-Cys369. Asn345 carries N-linked (GlcNAc...) asparagine glycosylation. FAS1 domains are found at residues 379 to 512 (ELNT…DRAM) and 522 to 659 (NPQQ…TGVL). Asn572, Asn626, Asn673, and Asn691 each carry an N-linked (GlcNAc...) asparagine glycan. The EGF-like 6 domain occupies 743–783 (DCNPCPGGFMNPCSGNGQCIDGLGGNGTCICEDGFQGSRCQ). 3 cysteine pairs are disulfide-bonded: Cys747-Cys761, Cys755-Cys771, and Cys773-Cys782. Residue Asn768 is glycosylated (N-linked (GlcNAc...) asparagine). N-linked (GlcNAc...) asparagine glycosylation is present at Asn796. 4 consecutive EGF-like domains span residues 833-873 (QTSA…TLCS), 874-917 (KKDP…RDCV), 918-960 (EINS…IDCE), and 961-1002 (PIIS…VLCY). 12 cysteine pairs are disulfide-bonded: Cys837-Cys850, Cys844-Cys859, Cys861-Cys872, Cys878-Cys893, Cys887-Cys903, Cys905-Cys916, Cys922-Cys936, Cys930-Cys946, Cys948-Cys959, Cys965-Cys978, Cys972-Cys988, and Cys990-Cys1001. An N-linked (GlcNAc...) asparagine glycan is attached at Asn854. Asn933 carries N-linked (GlcNAc...) asparagine glycosylation. FAS1 domains are found at residues 1002-1135 (YGNV…NKVL) and 1145-1273 (LPSL…EKVL). Asn1024, Asn1036, Asn1108, Asn1255, and Asn1283 each carry an N-linked (GlcNAc...) asparagine glycan. In terms of domain architecture, Laminin EGF-like 1 spans 1350–1415 (PQCQACPGKG…CSCVHGRCNQ (66 aa)). 18 disulfides stabilise this stretch: Cys1355/Cys1369, Cys1363/Cys1379, Cys1381/Cys1390, Cys1402/Cys1413, Cys1406/Cys1423, Cys1425/Cys1434, Cys1443/Cys1453, Cys1447/Cys1463, Cys1465/Cys1476, Cys1482/Cys1495, Cys1489/Cys1505, Cys1507/Cys1518, Cys1524/Cys1537, Cys1531/Cys1547, Cys1549/Cys1560, Cys1566/Cys1579, Cys1573/Cys1589, and Cys1591/Cys1602. Residues Asn1374 and Asn1386 are each glycosylated (N-linked (GlcNAc...) asparagine). 4 consecutive EGF-like domains span residues 1439–1477 (TTDN…TVCT), 1478–1519 (AINA…IVCL), 1520–1561 (EINP…KVCT), and 1562–1603 (LINV…IVCR). Asn1444 carries N-linked (GlcNAc...) asparagine glycosylation. Asn1472 carries an N-linked (GlcNAc...) asparagine glycan. Asn1580 is a glycosylation site (N-linked (GlcNAc...) asparagine). 2 FAS1 domains span residues 1603 to 1731 (RGSI…DTLL) and 1747 to 1888 (VLLN…DCLL). A glycan (N-linked (GlcNAc...) asparagine) is linked at Asn1750. A Laminin EGF-like 2 domain is found at 1965–2030 (PDCQACPGGP…GCSEHGQCDE (66 aa)). Cystine bridges form between Cys1970-Cys1984, Cys1978-Cys1994, Cys1996-Cys2005, Cys2017-Cys2028, Cys2022-Cys2038, Cys2040-Cys2049, Cys2059-Cys2069, Cys2063-Cys2075, Cys2077-Cys2088, Cys2094-Cys2107, Cys2101-Cys2116, Cys2118-Cys2129, Cys2135-Cys2149, Cys2143-Cys2159, Cys2161-Cys2172, Cys2228-Cys2296, and Cys2252-Cys2273. Asn2001 carries N-linked (GlcNAc...) asparagine glycosylation. EGF-like domains follow at residues 2055–2089 (VIPV…ITCT), 2090–2130 (VVDF…HSCT), and 2131–2173 (EIDP…RDCE). An N-linked (GlcNAc...) asparagine glycan is attached at Asn2072. The Link domain maps to 2206 to 2298 (GVFHLRSPLG…SEMWDVFCYR (93 aa)). Residues Asn2287, Asn2303, Asn2375, Asn2391, and Asn2400 are each glycosylated (N-linked (GlcNAc...) asparagine). One can recognise an FAS1 7 domain in the interval 2318 to 2452 (NGNLLQVLMS…GVLHIISEPL (135 aa)). Residues 2465–2485 (GLGTGIFCAVVLVTGAIALAA) form a helical membrane-spanning segment. At 2486–2559 (YSYFRLNQRT…NSDPLGALRS (74 aa)) the chain is on the cytoplasmic side. Ser2503 bears the Phosphoserine mark. An interaction with TMSB4X region spans residues 2510-2520 (LAFGKQQPESI). The interval 2514 to 2559 (KQQPESITNPLYETSTPAAPEPSCDPFTDSGERELENSDPLGALRS) is disordered. The segment covering 2516–2530 (QPESITNPLYETSTP) has biased composition (polar residues).

As to quaternary structure, interacts with heparin, alpha-M/beta-2 integrin (ITGAM and ITGB2), and thymosin beta 4 (TMSB4X). Interacts with GULP1. Associates with clathrin and adapter protein AP-2; in liver sinusoidal endothelial cells (LSECs). Glycosylated. Post-translationally, proteolytically processed to yield a smaller protein. In terms of tissue distribution, expressed in endothelial sinuses of liver, lymph nodes, bone marrow, spleen and in specialised structures of eye, heart, brain and kidney. Expression is detected in corneal and lens epithelium, in mesenchymal cells of the heart valves, in the ependymal cells lining the ventricles in the brain, and in the prismatic epithelial cells covering the renal papillae.

It localises to the cytoplasm. Its subcellular location is the cell membrane. Its function is as follows. Phosphatidylserine receptor that enhances the engulfment of apoptotic cells. Hyaluronan receptor that binds to and mediates endocytosis of hyaluronic acid (HA). Also acts, in different species, as a primary systemic scavenger receptor for heparin (Hep), chondroitin sulfate (CS), dermatan sulfate (DS), nonglycosaminoglycan (GAG), acetylated low-density lipoprotein (AcLDL), pro-collagen propeptides and advanced glycation end products (AGE). May serve to maintain tissue integrity by supporting extracellular matrix turnover or it may contribute to maintaining fluidity of bodily liquids by resorption of hyaluronan. Counter receptor which plays an important role in lymphocyte recruitment in the hepatic vasculature. Binds to both Gram-positive and Gram-negative bacteria and may play a role in defense against bacterial infection. The proteolytically processed short form also functions as an endocytosis receptor for heparin internalization as well as HA and CS. In Mus musculus (Mouse), this protein is Stabilin-2.